We begin with the raw amino-acid sequence, 364 residues long: Aminomethyltransferase (364 aa).

This sequence belongs to the GcvT family. In terms of assembly, the glycine cleavage system is composed of four proteins: P, T, L and H.

It carries out the reaction N(6)-[(R)-S(8)-aminomethyldihydrolipoyl]-L-lysyl-[protein] + (6S)-5,6,7,8-tetrahydrofolate = N(6)-[(R)-dihydrolipoyl]-L-lysyl-[protein] + (6R)-5,10-methylene-5,6,7,8-tetrahydrofolate + NH4(+). The glycine cleavage system catalyzes the degradation of glycine. The chain is Aminomethyltransferase from Geobacillus kaustophilus (strain HTA426).